We begin with the raw amino-acid sequence, 570 residues long: Low-affinity glucose transporter HXT1 (570 aa).

Residues 1-20 (MNSTPDLISPQKSNSSNSYE) are compositionally biased toward polar residues. The interval 1–51 (MNSTPDLISPQKSNSSNSYELESGRSKAMNTPEGKNESFHDNLSESQVQPA) is disordered. Topologically, residues 1 to 60 (MNSTPDLISPQKSNSSNSYELESGRSKAMNTPEGKNESFHDNLSESQVQPAVAPPNTGKG) are cytoplasmic. Ser-23, Ser-38, and Ser-44 each carry phosphoserine. Residues 34 to 43 (GKNESFHDNL) are compositionally biased toward basic and acidic residues. A helical membrane pass occupies residues 61-81 (VYVTVSICCVMVAFGGFIFGW). Residues 82 to 116 (DTGTISGFVAQTDFLRRFGMKHHDGSHYLSKVRTG) are Extracellular-facing. A helical transmembrane segment spans residues 117 to 137 (LIVSIFNIGCAIGGIVLAKLG). The Cytoplasmic segment spans residues 138–143 (DMYGRR). Residues 144–164 (IGLIVVVVIYTIGIIIQIASI) form a helical membrane-spanning segment. Topologically, residues 165–174 (NKWYQYFIGR) are extracellular. The helical transmembrane segment at 175 to 195 (IISGLGVGGITVLSPMLISEV) threads the bilayer. Residues 196–201 (APSEMR) lie on the Cytoplasmic side of the membrane. Residues 202–222 (GTLVSCYQVMITLGIFLGYCT) traverse the membrane as a helical segment. The Extracellular portion of the chain corresponds to 223–236 (NFGTKNYSNSVQWR). Asn-228 carries an N-linked (GlcNAc...) asparagine glycan. A helical membrane pass occupies residues 237–257 (VPLGLCFAWALFMIGGMMFVP). Over 258–340 (ESPRYLVEAG…IQSLQQLTGD (83 aa)) the chain is Cytoplasmic. A helical transmembrane segment spans residues 341–357 (NYFFYYGTIVFQAVGLS). The Extracellular portion of the chain corresponds to 358-363 (DSFETS). The chain crosses the membrane as a helical span at residues 364–381 (IVFGVVNFFSTCCSLYTV). The Cytoplasmic segment spans residues 382 to 388 (DRFGRRN). A helical membrane pass occupies residues 389-409 (CLMWGAVGMVCCYVVYASVGV). The Extracellular segment spans residues 410–431 (TRLWPNGQDQPSSKGAGNCMIV). Residues 432 to 452 (FACFYIFCFATTWAPIAYVVI) form a helical membrane-spanning segment. Topologically, residues 453–469 (SECFPLRVKSKCMSIAS) are cytoplasmic. A helical membrane pass occupies residues 470-490 (AANWIWGFLISFFTPFITGAI). A topological domain (extracellular) is located at residue Asn-491. Residues 492 to 512 (FYYGYVFMGCMVFAYFYVFFF) form a helical membrane-spanning segment. At 513 to 570 (VPETKGLSLEEVNDMYAEGVLPWKSASWVPVSKRGADYNADDLMHDDQPFYKSLFSRK) the chain is on the cytoplasmic side.

Belongs to the major facilitator superfamily. Sugar transporter (TC 2.A.1.1) family.

The protein resides in the membrane. In terms of biological role, low-affinity glucose transporter. HXT1 is as well involved in the transport of mannose. The chain is Low-affinity glucose transporter HXT1 (HXT1) from Saccharomyces cerevisiae (strain ATCC 204508 / S288c) (Baker's yeast).